The following is a 399-amino-acid chain: Putative endoplasmin-like protein (399 aa).

Residue K130 forms a Glycyl lysine isopeptide (Lys-Gly) (interchain with G-Cter in SUMO2) linkage. The interval L350 to L399 is disordered. Over residues V354–E367 the composition is skewed to acidic residues. A compositionally biased stretch (basic and acidic residues) spans D368–L399.

It belongs to the heat shock protein 90 family.

Putative molecular chaperone. In Homo sapiens (Human), this protein is Putative endoplasmin-like protein (HSP90B2P).